The chain runs to 515 residues: 1-pyrroline-5-carboxylate dehydrogenase (515 aa).

Catalysis depends on residues Glu-286 and Cys-320.

This sequence belongs to the aldehyde dehydrogenase family. RocA subfamily.

The catalysed reaction is L-glutamate 5-semialdehyde + NAD(+) + H2O = L-glutamate + NADH + 2 H(+). Its pathway is amino-acid degradation; L-proline degradation into L-glutamate; L-glutamate from L-proline: step 2/2. The chain is 1-pyrroline-5-carboxylate dehydrogenase from Oceanobacillus iheyensis (strain DSM 14371 / CIP 107618 / JCM 11309 / KCTC 3954 / HTE831).